We begin with the raw amino-acid sequence, 822 residues long: ATP-dependent zinc metalloprotease FTSH 7, chloroplastic (822 aa).

3 stretches are compositionally biased toward low complexity: residues 1–34 (MASA…RRAS), 80–94 (AEAS…SSSG), and 101–122 (AAAA…AAAT). Disordered stretches follow at residues 1–44 (MASA…ASVR) and 67–136 (PAAR…ENKW). The transit peptide at 1–70 (MASASAAAET…RVLRRPPAAR (70 aa)) directs the protein to the chloroplast. 2 consecutive transmembrane segments (helical) span residues 154–174 (IVQG…IFAL) and 288–308 (GGLL…AVVL). 386–393 (GLPGTGKT) provides a ligand contact to ATP. His-611 contributes to the Zn(2+) binding site. Glu-612 is an active-site residue. Residues His-615 and Asp-694 each coordinate Zn(2+).

The protein in the N-terminal section; belongs to the AAA ATPase family. It in the C-terminal section; belongs to the peptidase M41 family. Zn(2+) is required as a cofactor.

Its subcellular location is the plastid. The protein resides in the chloroplast thylakoid membrane. Its function is as follows. Probable ATP-dependent zinc metallopeptidase. The chain is ATP-dependent zinc metalloprotease FTSH 7, chloroplastic (FTSH7) from Oryza sativa subsp. japonica (Rice).